A 360-amino-acid polypeptide reads, in one-letter code: Phospho-N-acetylmuramoyl-pentapeptide-transferase (360 aa).

Transmembrane regions (helical) follow at residues 27 to 47, 73 to 93, 97 to 117, 132 to 152, 164 to 184, 199 to 219, 236 to 256, 263 to 283, 288 to 308, and 337 to 357; these read ILSV…MIRM, TMGG…WGDL, FVWI…VDDW, WKYL…FFTA, FFKS…YFVI, GLAI…AYAG, AGEL…FLWF, VFMG…MAVI, IVLF…MLQV, and KIIV…LATL.

It belongs to the glycosyltransferase 4 family. MraY subfamily. Requires Mg(2+) as cofactor.

It is found in the cell inner membrane. The enzyme catalyses UDP-N-acetyl-alpha-D-muramoyl-L-alanyl-gamma-D-glutamyl-meso-2,6-diaminopimeloyl-D-alanyl-D-alanine + di-trans,octa-cis-undecaprenyl phosphate = di-trans,octa-cis-undecaprenyl diphospho-N-acetyl-alpha-D-muramoyl-L-alanyl-D-glutamyl-meso-2,6-diaminopimeloyl-D-alanyl-D-alanine + UMP. The protein operates within cell wall biogenesis; peptidoglycan biosynthesis. Catalyzes the initial step of the lipid cycle reactions in the biosynthesis of the cell wall peptidoglycan: transfers peptidoglycan precursor phospho-MurNAc-pentapeptide from UDP-MurNAc-pentapeptide onto the lipid carrier undecaprenyl phosphate, yielding undecaprenyl-pyrophosphoryl-MurNAc-pentapeptide, known as lipid I. The protein is Phospho-N-acetylmuramoyl-pentapeptide-transferase of Alcanivorax borkumensis (strain ATCC 700651 / DSM 11573 / NCIMB 13689 / SK2).